We begin with the raw amino-acid sequence, 615 residues long: Pentatricopeptide repeat-containing protein At2g25580 (615 aa).

The disordered stretch occupies residues 40-98; sequence FGNSNDSSEMNPREGYNGRIQNRTGSSGEVSESIHTQSQSLGSNQGRNEQSWKQSPSLS. A compositionally biased stretch (polar residues) spans 58–98; it reads RIQNRTGSSGEVSESIHTQSQSLGSNQGRNEQSWKQSPSLS. PPR repeat units lie at residues 288-318, 319-353, 354-389, and 390-420; these read DLSS…MSEK, NLET…GNIP, DGQL…GIAP, and SIED…MPME. The tract at residues 490-520 is type E(+) motif; that stretch reads SSMQEFRAGDTNLPENDELFQLLRNLKMHMV. A type DYW motif region spans residues 521 to 615; the sequence is EVGYVAETRM…NGACTCKDYW (95 aa).

Belongs to the PPR family. PCMP-H subfamily.

This Arabidopsis thaliana (Mouse-ear cress) protein is Pentatricopeptide repeat-containing protein At2g25580 (PCMP-H75).